Reading from the N-terminus, the 130-residue chain is Small ribosomal subunit protein uS9 (130 aa).

This sequence belongs to the universal ribosomal protein uS9 family.

The sequence is that of Small ribosomal subunit protein uS9 from Geobacillus thermodenitrificans (strain NG80-2).